A 54-amino-acid chain; its full sequence is Apelin receptor early endogenous ligand (54 aa).

A signal peptide spans 1–25 (MRFQPLFWVFFIFAMSLLFITEEKS).

Belongs to the Elabela/Toddler family. In terms of assembly, interacts with APLNR.

The protein localises to the secreted. It localises to the extracellular space. Its function is as follows. Peptide hormone that functions as endogenous ligand for the G-protein-coupled apelin receptor (APLNR/APJ), that plays a role in the regulation of normal cardiovascular function and fluid homeostasis. Functions as a balanced agonist activating both G(i) protein pathway and beta-arrestin pathway of APLNR. Downstream G proteins activation, apelin can inhibit cAMP production and activate key intracellular effectors such as ERKs. On the other hand, APLNR activation induces beta-arrestin recruitment to the membrane leading to desensitization and internalization of the receptor. Required for mesendodermal differentiation, blood vessels formation and heart morphogenesis during early development and for adult cardiovascular homeostasis. Acts as a motogen by promoting mesendodermal cell migration during gastrulation by binding and activating APLNR. Acts as an early embryonic regulator of cellular movement with a role in migration and development of cardiac progenitor cells. May act as a chemoattractant for the activation of angioblast migration toward the embryonic midline, i.e. the position of the future vessel formation, during vasculogenesis. Positively regulates sinus venosus (SV)-derived endothelial cells migration into the developing heart to promote coronary blood vessel sprouting. Plays a role in placental vascular development; promotes placental trophoblast invasion and spiral artery remodeling in the uterus. Involved in the regulation of maternal cardiovascular homeostasis to prevent gestational hypertension and for potent cardioprotective functions during heart failure. Mediates myocardial contractility in an ERK1/2-dependent manner. The sequence is that of Apelin receptor early endogenous ligand from Rattus norvegicus (Rat).